The following is a 140-amino-acid chain: Large ribosomal subunit protein bL17 (140 aa).

It belongs to the bacterial ribosomal protein bL17 family. In terms of assembly, part of the 50S ribosomal subunit. Contacts protein L32.

The polypeptide is Large ribosomal subunit protein bL17 (Rhizobium etli (strain ATCC 51251 / DSM 11541 / JCM 21823 / NBRC 15573 / CFN 42)).